Here is a 356-residue protein sequence, read N- to C-terminus: GTPase HflX (356 aa).

Residues 180-356 (PSIGIVGYTN…KIYQLATQLS (177 aa)) form the Hflx-type G domain. GTP is bound by residues 186-193 (GYTNSGKT), 211-215 (FTTMS), 232-235 (DTVG), 300-303 (NKID), and 334-336 (SAL). Residues Thr-193 and Thr-213 each coordinate Mg(2+).

This sequence belongs to the TRAFAC class OBG-HflX-like GTPase superfamily. HflX GTPase family. In terms of assembly, monomer. Associates with the 50S ribosomal subunit. Does not associate with 70S ribosomes. Requires Mg(2+) as cofactor.

It localises to the cytoplasm. Its activity is regulated as follows. GTPase activity is stimulated by the presence of 50S ribosomal subunits. Hydrolysis is probably regulated by the HflX N-terminal domain. Functionally, GTPase that associates with the 50S ribosomal subunit and may have a role during protein synthesis or ribosome biogenesis. Specific for GTP. The protein is GTPase HflX of Saccharolobus solfataricus (strain ATCC 35092 / DSM 1617 / JCM 11322 / P2) (Sulfolobus solfataricus).